Consider the following 428-residue polypeptide: NADP-specific glutamate dehydrogenase (428 aa).

2 residues coordinate substrate: K68 and K92. Residue K104 is the Proton donor of the active site. T188 and N219 together coordinate NADP(+). S356 is a substrate binding site.

It belongs to the Glu/Leu/Phe/Val dehydrogenases family. As to quaternary structure, homohexamer.

It catalyses the reaction L-glutamate + NADP(+) + H2O = 2-oxoglutarate + NH4(+) + NADPH + H(+). Functionally, catalyzes the reversible oxidative deamination of glutamate to alpha-ketoglutarate and ammonia. The chain is NADP-specific glutamate dehydrogenase (gdhA) from Synechocystis sp. (strain ATCC 27184 / PCC 6803 / Kazusa).